A 132-amino-acid polypeptide reads, in one-letter code: D-ribose pyranase (132 aa).

H20 acts as the Proton donor in catalysis. Residues D28, H98, and 120 to 122 (YAN) each bind substrate.

Belongs to the RbsD / FucU family. RbsD subfamily. Homodecamer.

The protein resides in the cytoplasm. The catalysed reaction is beta-D-ribopyranose = beta-D-ribofuranose. The protein operates within carbohydrate metabolism; D-ribose degradation; D-ribose 5-phosphate from beta-D-ribopyranose: step 1/2. Catalyzes the interconversion of beta-pyran and beta-furan forms of D-ribose. In Geobacillus thermodenitrificans (strain NG80-2), this protein is D-ribose pyranase.